The following is an 88-amino-acid chain: Large ribosomal subunit protein bL27 (88 aa).

The disordered stretch occupies residues 1–24; that stretch reads MAHKKGTGSTRNGRDSNSKRLGVK.

It belongs to the bacterial ribosomal protein bL27 family.

The sequence is that of Large ribosomal subunit protein bL27 from Prochlorococcus marinus (strain MIT 9313).